Reading from the N-terminus, the 685-residue chain is Diphthine--ammonia ligase (685 aa).

It in the C-terminal section; belongs to the RutC family. The protein in the N-terminal section; belongs to the Diphthine--ammonia ligase family. Interacts with elongation factor 2 (eEF-2; EFT1 or EFT2).

The protein resides in the cytoplasm. It catalyses the reaction diphthine-[translation elongation factor 2] + NH4(+) + ATP = diphthamide-[translation elongation factor 2] + AMP + diphosphate + H(+). Its pathway is protein modification; peptidyl-diphthamide biosynthesis. In terms of biological role, amidase that catalyzes the last step of diphthamide biosynthesis using ammonium and ATP. Diphthamide biosynthesis consists in the conversion of an L-histidine residue in the translation elongation factor eEF-2 (EFT1 or EFT2) to diphthamide. This is Diphthine--ammonia ligase (DPH6) from Saccharomyces cerevisiae (strain ATCC 204508 / S288c) (Baker's yeast).